A 748-amino-acid polypeptide reads, in one-letter code: Formate acetyltransferase (748 aa).

Residues 5 to 618 form the PFL domain; it reads NNHTNAWQGF…KTGNTPDGRK (614 aa). Residue Cys-412 is the S-acetylcysteine intermediate of the active site. The Cysteine radical intermediate role is filled by Cys-413. The region spanning 625–748 is the Glycine radical domain; that stretch reads PGANPMHGRD…VISRTFHESM (124 aa). A Glycine radical modification is found at Gly-723.

This sequence belongs to the glycyl radical enzyme (GRE) family. PFL subfamily. As to quaternary structure, homodimer.

Its subcellular location is the cytoplasm. The enzyme catalyses formate + acetyl-CoA = pyruvate + CoA. The protein operates within fermentation; pyruvate fermentation; formate from pyruvate: step 1/1. Catalyzes the conversion of pyruvate to formate and acetyl-CoA. The polypeptide is Formate acetyltransferase (pflB) (Staphylococcus epidermidis (strain ATCC 35984 / DSM 28319 / BCRC 17069 / CCUG 31568 / BM 3577 / RP62A)).